The sequence spans 188 residues: MRLPLPLLLLFGCRAILGSAGDRVSLSASAPTLDDEEKYSAHMPAHLRCDACRAVAFQMGQRLAKAEAKSHTPDASGLQELSESTYTDVLDQTCSQNWQSYGVHEVNQMKRLTGPGLSKGPEPRISVMISGGPWPNRLSKTCFHYLGEFGEDQIYEAYRQGQANLEALLCGGTHGPCSQEILAQREEL.

The first 20 residues, 1-20, serve as a signal peptide directing secretion; the sequence is MRLPLPLLLLFGCRAILGSA. 3 cysteine pairs are disulfide-bonded: Cys-49–Cys-177, Cys-52–Cys-170, and Cys-94–Cys-142. Residues 185–188 carry the Prevents secretion from ER motif; that stretch reads REEL.

Belongs to the MZB1 family. In terms of assembly, part of the ER chaperone complex, a multi-protein complex in the endoplasmic reticulum containing a large number of molecular chaperones which associates with unassembled incompletely folded immunoglobulin heavy chains. Interacts with HSP90B1 and PDIA3 in a calcium-dependent manner. In terms of processing, forms an interchain disulfide bond with IgM monomers. As to expression, expressed predominantly in the spleen and lymph nodes. Abundantly expressed in marginal zone B and B1 cells. High expression in mesenteric adipose tissue (MAT). Expressed also in pancreas, perigonadal adipose tissue (PAT), uterus, subcutaneous adipose tissue, heart, muscle, ovary and liver. Very low expression is detected in brown adipose tissue. In PAT, significantly higher expression in stromal-vascular cell than in adipocytes. Expressed in macrophage RAW 264.7 cell line. Down-regulated in For-knockout female MAT at 5 months (obese state) followed by steep up-regulation at 9 months (prediabetic condition) when mutants progress towards the metabolic syndrome.

The protein resides in the endoplasmic reticulum. The protein localises to the endoplasmic reticulum lumen. Its subcellular location is the secreted. Associates with immunoglobulin M (IgM) heavy and light chains and promotes IgM assembly and secretion. May exert its effect by acting as a molecular chaperone or as an oxidoreductase as it displays a low level of oxidoreductase activity. Helps to diversify peripheral B-cell functions by regulating Ca(2+) stores, antibody secretion and integrin activation. Its function is as follows. Acts as a hormone-regulated adipokine/pro-inflammatory cytokine that is implicated in causing chronic inflammation, affecting cellular expansion and blunting insulin response in adipocytes. May have a role in the onset of insulin resistance. In Mus musculus (Mouse), this protein is Marginal zone B- and B1-cell-specific protein (Mzb1).